The primary structure comprises 299 residues: MKPDAQRVKQFLLSLQDDICQQLAAVDGADFVEDSWQRDAGGGGRSRVLRNGGVFEQAGVNFSHVHGDAMPASATAHRPELAGRSFEAMGVSLVVHPLNPYIPTSHANVRFFIAEKPGAEPVWWFGGGFDLTPYYAFEEDAIHWHRTARDLCQPYGEDVYPRYKKWCDDYFFLKHRDEQRGIGGLFFDDLNTPDFDSCFRFMQAVGKGYTDAFLPIVERRKAMVWGERERHFQLYRRGRYVEFNLVWDRGTLFGLQTGGRTESILMSMPPLVRWEYDWQPEEGSPEAALSEFIKVRDWV.

Position 92 (Ser-92) interacts with substrate. A divalent metal cation is bound by residues His-96 and His-106. Residue His-106 is the Proton donor of the active site. Asn-108–Arg-110 contacts substrate. 2 residues coordinate a divalent metal cation: His-145 and His-175. The tract at residues Tyr-240–Glu-275 is important for dimerization. Position 258–260 (Gly-258–Arg-260) interacts with substrate.

This sequence belongs to the aerobic coproporphyrinogen-III oxidase family. Homodimer. The cofactor is a divalent metal cation.

It localises to the cytoplasm. The enzyme catalyses coproporphyrinogen III + O2 + 2 H(+) = protoporphyrinogen IX + 2 CO2 + 2 H2O. The protein operates within porphyrin-containing compound metabolism; protoporphyrin-IX biosynthesis; protoporphyrinogen-IX from coproporphyrinogen-III (O2 route): step 1/1. Functionally, involved in the heme biosynthesis. Catalyzes the aerobic oxidative decarboxylation of propionate groups of rings A and B of coproporphyrinogen-III to yield the vinyl groups in protoporphyrinogen-IX. This is Oxygen-dependent coproporphyrinogen-III oxidase from Citrobacter koseri (strain ATCC BAA-895 / CDC 4225-83 / SGSC4696).